We begin with the raw amino-acid sequence, 185 residues long: Peptide deformylase (185 aa).

Residues Cys-112 and His-155 each contribute to the Fe cation site. Glu-156 is a catalytic residue. His-159 lines the Fe cation pocket.

The protein belongs to the polypeptide deformylase family. Requires Fe(2+) as cofactor.

It catalyses the reaction N-terminal N-formyl-L-methionyl-[peptide] + H2O = N-terminal L-methionyl-[peptide] + formate. Functionally, removes the formyl group from the N-terminal Met of newly synthesized proteins. Requires at least a dipeptide for an efficient rate of reaction. N-terminal L-methionine is a prerequisite for activity but the enzyme has broad specificity at other positions. In Latilactobacillus sakei subsp. sakei (strain 23K) (Lactobacillus sakei subsp. sakei), this protein is Peptide deformylase.